The sequence spans 493 residues: Ribonuclease Y (493 aa).

The helical transmembrane segment at 19–39 threads the bilayer; it reads IFAILFLIIVILNLGLLVFLA. Residues 172 to 241 form the KH domain; it reads SASFTVIESD…LTIRNILIND (70 aa). Positions 300–392 constitute an HD domain; that stretch reads VLSHCLETGF…TQIGDKLSAG (93 aa).

The protein belongs to the RNase Y family.

It localises to the cell membrane. Functionally, endoribonuclease that initiates mRNA decay. This is Ribonuclease Y from Mycoplasma pneumoniae (strain ATCC 29342 / M129 / Subtype 1) (Mycoplasmoides pneumoniae).